Consider the following 249-residue polypeptide: ATP synthase subunit a (249 aa).

The next 5 membrane-spanning stretches (helical) occupy residues 33–53 (GQVI…SIAA), 92–112 (LPFI…GALI), 131–151 (INTT…AGIS), 196–216 (LVVA…LMAL), and 217–237 (GLFT…AYIH).

Belongs to the ATPase A chain family. F-type ATPases have 2 components, CF(1) - the catalytic core - and CF(0) - the membrane proton channel. CF(1) has five subunits: alpha(3), beta(3), gamma(1), delta(1), epsilon(1). CF(0) has four main subunits: a, b, b' and c.

Its subcellular location is the cellular thylakoid membrane. In terms of biological role, key component of the proton channel; it plays a direct role in the translocation of protons across the membrane. The sequence is that of ATP synthase subunit a from Microcystis aeruginosa (strain NIES-843 / IAM M-2473).